A 317-amino-acid chain; its full sequence is tRNA pseudouridine synthase B (317 aa).

D47 (nucleophile) is an active-site residue.

It belongs to the pseudouridine synthase TruB family. Type 1 subfamily.

It carries out the reaction uridine(55) in tRNA = pseudouridine(55) in tRNA. Functionally, responsible for synthesis of pseudouridine from uracil-55 in the psi GC loop of transfer RNAs. This Shewanella woodyi (strain ATCC 51908 / MS32) protein is tRNA pseudouridine synthase B.